The chain runs to 354 residues: Phospho-N-acetylmuramoyl-pentapeptide-transferase (354 aa).

10 helical membrane-spanning segments follow: residues 16–36 (YITV…LYLM), 66–86 (TPTM…LLTV), 88–108 (IHNP…AIGV), 130–150 (FFLQ…YAHL), 168–188 (IFGI…VNLT), 193–213 (GLAT…TYIT), 227–247 (IIGV…LIGF), 257–277 (VFMG…MAII), 282–302 (VLLI…IIQV), and 331–351 (KIIV…LITL).

This sequence belongs to the glycosyltransferase 4 family. MraY subfamily. Mg(2+) serves as cofactor.

The protein resides in the cell inner membrane. It catalyses the reaction UDP-N-acetyl-alpha-D-muramoyl-L-alanyl-gamma-D-glutamyl-meso-2,6-diaminopimeloyl-D-alanyl-D-alanine + di-trans,octa-cis-undecaprenyl phosphate = di-trans,octa-cis-undecaprenyl diphospho-N-acetyl-alpha-D-muramoyl-L-alanyl-D-glutamyl-meso-2,6-diaminopimeloyl-D-alanyl-D-alanine + UMP. The protein operates within cell wall biogenesis; peptidoglycan biosynthesis. Its function is as follows. Catalyzes the initial step of the lipid cycle reactions in the biosynthesis of the cell wall peptidoglycan: transfers peptidoglycan precursor phospho-MurNAc-pentapeptide from UDP-MurNAc-pentapeptide onto the lipid carrier undecaprenyl phosphate, yielding undecaprenyl-pyrophosphoryl-MurNAc-pentapeptide, known as lipid I. The sequence is that of Phospho-N-acetylmuramoyl-pentapeptide-transferase from Nitratiruptor sp. (strain SB155-2).